The primary structure comprises 300 residues: Serine/arginine-rich splicing factor SR34A (300 aa).

In terms of domain architecture, RRM 1 spans 7–82 (RSIYVGNLPG…CRLRVELAHG (76 aa)). 2 disordered regions span residues 81 to 110 (HGGR…GGGG) and 198 to 300 (YESS…EGSV). A compositionally biased stretch (gly residues) spans 94 to 110 (GYGGGGSGYGGGGGGGG). The RRM 2 domain occupies 122 to 200 (FRVIVRGLPS…GFIRVKKYES (79 aa)). Residues 203–239 (SRSRSPSRSRSRSRSRSRSRGRGRSHSRSRSLSRSKS) are compositionally biased toward basic residues. Phosphoserine occurs at positions 207, 209, 231, 233, 239, 259, 275, and 285. Low complexity predominate over residues 253–262 (SRSISKSRSP). Residues 275–287 (SRSKSRSRSRSRS) show a composition bias toward basic residues.

Belongs to the splicing factor SR family. SR subfamily. Component of the spliceosome.

Its subcellular location is the nucleus speckle. It is found in the nucleus. The protein localises to the nucleoplasm. In terms of biological role, probably involved in intron recognition and spliceosome assembly. The protein is Serine/arginine-rich splicing factor SR34A (SR34A) of Arabidopsis thaliana (Mouse-ear cress).